The primary structure comprises 489 residues: Amino acid transporter AVT6E (489 aa).

11 helical membrane-spanning segments follow: residues 76-96 (GIYG…IMAL), 102-122 (VLGL…SEIS), 156-176 (ICII…MGDV), 201-221 (VLIL…NKID), 227-247 (SAAS…VATI), 269-289 (ILDL…HFNV), 310-330 (ITTA…YLLF), 357-377 (IVRI…HFSL), 404-424 (VVLL…WTAF), 425-445 (KFTG…LIAL), and 461-481 (VSWL…IGNI).

This sequence belongs to the amino acid/polyamine transporter 2 family. Amino acid/auxin permease (AAAP) (TC 2.A.18.6) subfamily.

The protein resides in the endoplasmic reticulum membrane. It localises to the vacuole membrane. This is Amino acid transporter AVT6E from Arabidopsis thaliana (Mouse-ear cress).